The chain runs to 398 residues: Succinate--CoA ligase [ADP-forming] subunit beta (398 aa).

Residues 9–254 (KALLHEFGVP…ETEEDAKEIE (246 aa)) enclose the ATP-grasp domain. Residues Lys46, 53–55 (GRG), Glu109, Ser112, and Glu117 contribute to the ATP site. Mg(2+) is bound by residues Asn209 and Asp223. Substrate contacts are provided by residues Asn274 and 331 to 333 (GIM).

It belongs to the succinate/malate CoA ligase beta subunit family. In terms of assembly, heterotetramer of two alpha and two beta subunits. It depends on Mg(2+) as a cofactor.

The catalysed reaction is succinate + ATP + CoA = succinyl-CoA + ADP + phosphate. It carries out the reaction GTP + succinate + CoA = succinyl-CoA + GDP + phosphate. Its pathway is carbohydrate metabolism; tricarboxylic acid cycle; succinate from succinyl-CoA (ligase route): step 1/1. Its function is as follows. Succinyl-CoA synthetase functions in the citric acid cycle (TCA), coupling the hydrolysis of succinyl-CoA to the synthesis of either ATP or GTP and thus represents the only step of substrate-level phosphorylation in the TCA. The beta subunit provides nucleotide specificity of the enzyme and binds the substrate succinate, while the binding sites for coenzyme A and phosphate are found in the alpha subunit. This Bradyrhizobium sp. (strain ORS 278) protein is Succinate--CoA ligase [ADP-forming] subunit beta.